Here is a 188-residue protein sequence, read N- to C-terminus: FMN-dependent NADPH-azoreductase (188 aa).

Belongs to the azoreductase type 2 family. As to quaternary structure, homotetramer. FMN serves as cofactor.

Functionally, catalyzes the reductive cleavage of azo bond in aromatic azo compounds to the corresponding amines. Requires NADPH, but not NADH, as an electron donor for its activity. This Staphylococcus epidermidis (strain ATCC 12228 / FDA PCI 1200) protein is FMN-dependent NADPH-azoreductase (azo1).